The following is a 101-amino-acid chain: Small ribosomal subunit protein uS14 (101 aa).

Positions 1-10 are enriched in basic and acidic residues; it reads MAKKSSIEKN. The tract at residues 1-24 is disordered; that stretch reads MAKKSSIEKNNRRKRLTKNAAPKR. Residues 11–24 are compositionally biased toward basic residues; the sequence is NRRKRLTKNAAPKR.

Belongs to the universal ribosomal protein uS14 family. As to quaternary structure, part of the 30S ribosomal subunit. Contacts proteins S3 and S10.

In terms of biological role, binds 16S rRNA, required for the assembly of 30S particles and may also be responsible for determining the conformation of the 16S rRNA at the A site. This Rhodopseudomonas palustris (strain BisB18) protein is Small ribosomal subunit protein uS14.